The primary structure comprises 378 residues: Glutamate 5-kinase (378 aa).

Residue lysine 20 coordinates ATP. Substrate contacts are provided by serine 60, aspartate 147, and asparagine 159. ATP-binding positions include 179-180 (TD) and 221-227 (TGGMLTK). One can recognise a PUA domain in the interval 286-364 (RGRVVLDDGA…SQIARILGSM (79 aa)).

This sequence belongs to the glutamate 5-kinase family.

Its subcellular location is the cytoplasm. It catalyses the reaction L-glutamate + ATP = L-glutamyl 5-phosphate + ADP. It functions in the pathway amino-acid biosynthesis; L-proline biosynthesis; L-glutamate 5-semialdehyde from L-glutamate: step 1/2. Its function is as follows. Catalyzes the transfer of a phosphate group to glutamate to form L-glutamate 5-phosphate. The chain is Glutamate 5-kinase from Bordetella pertussis (strain Tohama I / ATCC BAA-589 / NCTC 13251).